The chain runs to 878 residues: Interleukin-3 receptor class 2 subunit beta (878 aa).

The N-terminal stretch at 1–22 is a signal peptide; sequence MDQQMALTWGLCYMALVALCWG. Residues 23–440 are Extracellular-facing; the sequence is HEVTEEEETV…SNEYTWTTDW (418 aa). A disulfide bridge connects residues cysteine 39 and cysteine 49. Asparagine 62 carries N-linked (GlcNAc...) asparagine glycosylation. An intrachain disulfide couples cysteine 78 to cysteine 95. The 106-residue stretch at 139–244 folds into the Fibronectin type-III 1 domain; it reads PPKDIHISPS…PEVHWDSQPG (106 aa). The disordered stretch occupies residues 223 to 244; that stretch reads GSSLSGRPSRWSPEVHWDSQPG. Disulfide bonds link cysteine 254–cysteine 264 and cysteine 293–cysteine 310. The 96-residue stretch at 343-438 folds into the Fibronectin type-III 2 domain; that stretch reads QMEPPILNQT…EWSNEYTWTT (96 aa). An N-linked (GlcNAc...) asparagine glycan is attached at asparagine 350. Positions 427–431 match the WSXWS motif motif; sequence WSEWS. A helical transmembrane segment spans residues 441 to 462; that stretch reads VMPTLWIVLILVFLIFTLLLAL. Residues 463-878 lie on the Cytoplasmic side of the membrane; it reads HFGRVYGYRT…AIQFFKSLKY (416 aa). Residues 476 to 484 carry the Box 1 motif motif; that stretch reads WKEKIPNPS. Disordered regions lie at residues 539-620 and 660-709; these read LTIE…GGSL and SSLE…MASD. Polar residues predominate over residues 554–570; that stretch reads PDTTPAASSESTEQLPN. A compositionally biased stretch (basic and acidic residues) spans 671 to 689; it reads EPKENPPVELSVEKQEARD. Serine 752 and serine 754 each carry phosphoserine. Residue tyrosine 765 is modified to Phosphotyrosine. 2 disordered regions span residues 771-810 and 829-849; these read SVSQ…PHPE and PGSL…ETED.

The protein belongs to the type I cytokine receptor family. Type 4 subfamily. As to quaternary structure, heterodimer of an alpha and a beta subunit.

Its subcellular location is the membrane. Its function is as follows. In mouse, there are two classes of high-affinity IL3 receptors. One contains this IL3-specific beta subunit and the other contains the beta subunit also shared by high-affinity IL5 and GM-CSF receptors. The polypeptide is Interleukin-3 receptor class 2 subunit beta (Csf2rb2) (Mus musculus (Mouse)).